Consider the following 494-residue polypeptide: Aspartyl/glutamyl-tRNA(Asn/Gln) amidotransferase subunit B (494 aa).

It belongs to the GatB/GatE family. GatB subfamily. As to quaternary structure, heterotrimer of A, B and C subunits.

It carries out the reaction L-glutamyl-tRNA(Gln) + L-glutamine + ATP + H2O = L-glutaminyl-tRNA(Gln) + L-glutamate + ADP + phosphate + H(+). It catalyses the reaction L-aspartyl-tRNA(Asn) + L-glutamine + ATP + H2O = L-asparaginyl-tRNA(Asn) + L-glutamate + ADP + phosphate + 2 H(+). Allows the formation of correctly charged Asn-tRNA(Asn) or Gln-tRNA(Gln) through the transamidation of misacylated Asp-tRNA(Asn) or Glu-tRNA(Gln) in organisms which lack either or both of asparaginyl-tRNA or glutaminyl-tRNA synthetases. The reaction takes place in the presence of glutamine and ATP through an activated phospho-Asp-tRNA(Asn) or phospho-Glu-tRNA(Gln). This Nitrobacter winogradskyi (strain ATCC 25391 / DSM 10237 / CIP 104748 / NCIMB 11846 / Nb-255) protein is Aspartyl/glutamyl-tRNA(Asn/Gln) amidotransferase subunit B.